We begin with the raw amino-acid sequence, 197 residues long: dITP/XTP pyrophosphatase (197 aa).

Position 8 to 13 (8 to 13 (TGNVGK)) interacts with substrate. 2 residues coordinate Mg(2+): E40 and D69. D69 acts as the Proton acceptor in catalysis. Substrate is bound by residues S70, 154 to 157 (FGYD), K177, and 182 to 183 (HR).

The protein belongs to the HAM1 NTPase family. Homodimer. Mg(2+) is required as a cofactor. Requires Mn(2+) as cofactor. Ni(2+) serves as cofactor.

It carries out the reaction XTP + H2O = XMP + diphosphate + H(+). The catalysed reaction is dITP + H2O = dIMP + diphosphate + H(+). It catalyses the reaction ITP + H2O = IMP + diphosphate + H(+). Pyrophosphatase that catalyzes the hydrolysis of nucleoside triphosphates to their monophosphate derivatives, with a high preference for the non-canonical purine nucleotides XTP (xanthosine triphosphate), dITP (deoxyinosine triphosphate) and ITP. Can also efficiently hydrolyze 2'-deoxy-N-6-hydroxylaminopurine triphosphate (dHAPTP). Seems to function as a house-cleaning enzyme that removes non-canonical purine nucleotides from the nucleotide pool, thus preventing their incorporation into DNA/RNA and avoiding chromosomal lesions. To a much lesser extent, is also able to hydrolyze GTP, dGTP and dUTP, but shows very low activity toward the canonical nucleotides dATP, dCTP and dTTP and toward 8-oxo-dGTP, purine deoxyribose triphosphate, 2-aminopurine deoxyribose triphosphate and 2,6-diaminopurine deoxyribose triphosphate. Functionally, genetic interactions among priB, dam, lexA, nagC, polA, rdgB, rdgB, rep and uup link the PriA-PriB replication restart pathway to DNA double-strand break repair. The chain is dITP/XTP pyrophosphatase from Escherichia coli (strain K12).